Consider the following 511-residue polypeptide: Bifunctional purine biosynthesis protein PurH (511 aa).

The MGS-like domain maps to 1–145 (MKKRALVSVS…KNHKFVSVIV (145 aa)).

Belongs to the PurH family.

It carries out the reaction (6R)-10-formyltetrahydrofolate + 5-amino-1-(5-phospho-beta-D-ribosyl)imidazole-4-carboxamide = 5-formamido-1-(5-phospho-D-ribosyl)imidazole-4-carboxamide + (6S)-5,6,7,8-tetrahydrofolate. It catalyses the reaction IMP + H2O = 5-formamido-1-(5-phospho-D-ribosyl)imidazole-4-carboxamide. It functions in the pathway purine metabolism; IMP biosynthesis via de novo pathway; 5-formamido-1-(5-phospho-D-ribosyl)imidazole-4-carboxamide from 5-amino-1-(5-phospho-D-ribosyl)imidazole-4-carboxamide (10-formyl THF route): step 1/1. It participates in purine metabolism; IMP biosynthesis via de novo pathway; IMP from 5-formamido-1-(5-phospho-D-ribosyl)imidazole-4-carboxamide: step 1/1. This chain is Bifunctional purine biosynthesis protein PurH, found in Bacillus cereus (strain ZK / E33L).